The sequence spans 130 residues: Small ribosomal subunit protein uS8 (130 aa).

Belongs to the universal ribosomal protein uS8 family. Part of the 30S ribosomal subunit. Contacts proteins S5 and S12.

In terms of biological role, one of the primary rRNA binding proteins, it binds directly to 16S rRNA central domain where it helps coordinate assembly of the platform of the 30S subunit. The polypeptide is Small ribosomal subunit protein uS8 (Actinobacillus succinogenes (strain ATCC 55618 / DSM 22257 / CCUG 43843 / 130Z)).